The following is a 267-amino-acid chain: Pyridoxine/pyridoxamine 5'-phosphate oxidase (267 aa).

Substrate is bound by residues 20 to 23 (RQGY) and lysine 80. Residues 75 to 80 (RTVLLK), 90 to 91 (YT), arginine 96, lysine 97, and glutamine 119 each bind FMN. Substrate-binding residues include tyrosine 137, arginine 141, and serine 145. FMN contacts are provided by residues 154–155 (QS) and tryptophan 200. 206–208 (RLH) serves as a coordination point for substrate. FMN is bound at residue arginine 210.

Belongs to the pyridoxamine 5'-phosphate oxidase family. In terms of assembly, homodimer. It depends on FMN as a cofactor.

It catalyses the reaction pyridoxamine 5'-phosphate + O2 + H2O = pyridoxal 5'-phosphate + H2O2 + NH4(+). The enzyme catalyses pyridoxine 5'-phosphate + O2 = pyridoxal 5'-phosphate + H2O2. It participates in cofactor metabolism; pyridoxal 5'-phosphate salvage; pyridoxal 5'-phosphate from pyridoxamine 5'-phosphate: step 1/1. The protein operates within cofactor metabolism; pyridoxal 5'-phosphate salvage; pyridoxal 5'-phosphate from pyridoxine 5'-phosphate: step 1/1. Functionally, catalyzes the oxidation of either pyridoxine 5'-phosphate (PNP) or pyridoxamine 5'-phosphate (PMP) into pyridoxal 5'-phosphate (PLP). In Frankia casuarinae (strain DSM 45818 / CECT 9043 / HFP020203 / CcI3), this protein is Pyridoxine/pyridoxamine 5'-phosphate oxidase.